Here is a 452-residue protein sequence, read N- to C-terminus: Transcription factor AP-2-delta (452 aa).

At Ser-239 the chain carries Phosphoserine; by PKA. Residues 280–410 (RRKAANVTLL…VLSEMLNYLE (131 aa)) form an H-S-H (helix-span-helix), dimerization region. The segment at 416–452 (KNGGAADSGQGHANSEKAPLRKASEAAVKEGKTEKTD) is disordered. Basic and acidic residues predominate over residues 429-452 (NSEKAPLRKASEAAVKEGKTEKTD).

The protein belongs to the AP-2 family. As to quaternary structure, binds DNA as a dimer. Can form homodimers or heterodimers with other AP-2 family members. Expressed in both embryonic and newborn brain.

Its subcellular location is the nucleus. Functionally, sequence-specific DNA-binding protein that interacts with inducible viral and cellular enhancer elements to regulate transcription of selected genes. AP-2 factors bind to the consensus sequence 5'-GCCNNNGGC-3' and activate genes involved in a large spectrum of important biological functions including proper eye, face, body wall, limb and neural tube development. They also suppress a number of genes including MCAM/MUC18, C/EBP alpha and MYC. This chain is Transcription factor AP-2-delta (Tfap2d), found in Mus musculus (Mouse).